Reading from the N-terminus, the 539-residue chain is Acid-sensing ion channel 4 (539 aa).

At 1–68 (MPIEIVCKIK…GPGPHGLRRT (68 aa)) the chain is on the cytoplasmic side. A helical transmembrane segment spans residues 69 to 89 (LWVLALLTSLAAFLYQAASLA). Residues 90–438 (RGYLTRPHLV…EQRAAYGLSA (349 aa)) lie on the Extracellular side of the membrane. 2 disulfides stabilise this stretch: cysteine 118–cysteine 202 and cysteine 180–cysteine 187. Asparagine 191, asparagine 243, asparagine 341, and asparagine 376 each carry an N-linked (GlcNAc...) asparagine glycan. 5 disulfide bridges follow: cysteine 296/cysteine 375, cysteine 318/cysteine 371, cysteine 322/cysteine 369, cysteine 331/cysteine 353, and cysteine 333/cysteine 345. The helical transmembrane segment at 439–459 (LLGDLGGQMGLFIGASILTLL) threads the bilayer. Residues 452–454 (GAS) carry the GAS motif; ion selectivity filter motif. Topologically, residues 460 to 539 (EILDYIYEVS…PGSLFEDFAC (80 aa)) are cytoplasmic. The interval 501–531 (EQSPCPNRGRAEGGGASNLLPNHHHPHGPPG) is disordered.

Belongs to the amiloride-sensitive sodium channel (TC 1.A.6) family. ASIC4 subfamily. As to quaternary structure, homotrimer. Heterotrimer; with other ASIC proteins producing functional channels. Expressed in brain, spinal cord and dorsal root ganglion (DRG). Expressed by a subset of sensory neurons in the DRG. Expressed by granule cells in the cerebellar cortex. In hippocampus, expression is detected in dentate gyrus granule cells, in pyramidal cells of CA1-CA3 subfields and in interneurons of the striatum oriens and radiatum of all subfields. In cerebral cortex expressed in small, medium and large pyramidal cells in layers 2, 3 and 5 respectively. Also expressed in striatum, globus pallidus, inferior and superior calliculi, amygdala, magnocellular preoptic nucleus, islands of Calleja and large neurons of olfactory tubercules.

The protein resides in the cell membrane. Functionally, does not exhibit measurable stand-alone pH-gated sodium channel activity but may form pH-gated heterotrimeric sodium channels. Its activity could also depend on alternative gating mechanisms. The chain is Acid-sensing ion channel 4 from Rattus norvegicus (Rat).